The chain runs to 205 residues: MQAPPSFYEGDTLEVAKKLLGQKLVHIVDGIKRSGIIVEVEAYKGPDDKAAHSYGGRRTDRTEVMFGAPGHAYVYLIYGMYHCFNVITAPVGTPQGVLIRALEPVDGIEEIKLARYNKTDITKAQYKNLTSGPGKLCRALGITLKERGLSLQSDTLHIELVPKDEHISSQYKIAAGPRINIDYAEEAVHYPWRFYYKGHPFVSKK.

Belongs to the DNA glycosylase MPG family.

This Bacillus cereus (strain G9842) protein is Putative 3-methyladenine DNA glycosylase.